The primary structure comprises 71 residues: Large ribosomal subunit protein bL31 (71 aa).

Zn(2+)-binding residues include cysteine 16, cysteine 18, cysteine 37, and cysteine 40.

This sequence belongs to the bacterial ribosomal protein bL31 family. Type A subfamily. Part of the 50S ribosomal subunit. The cofactor is Zn(2+).

Its function is as follows. Binds the 23S rRNA. This chain is Large ribosomal subunit protein bL31, found in Nitratidesulfovibrio vulgaris (strain ATCC 29579 / DSM 644 / CCUG 34227 / NCIMB 8303 / VKM B-1760 / Hildenborough) (Desulfovibrio vulgaris).